A 168-amino-acid polypeptide reads, in one-letter code: Pleiotrophin (168 aa).

The first 32 residues, 1–32 (MQTPQFLQQRRKFAAAFLAFIFLLAVVDTAEA), serve as a signal peptide directing secretion. 5 cysteine pairs are disulfide-bonded: Cys-47–Cys-76, Cys-55–Cys-85, Cys-62–Cys-89, Cys-99–Cys-131, and Cys-109–Cys-141. Chondroitin sulfate binding stretches follow at residues 92 to 99 (KKQFGAEC) and 123 to 131 (KRALHNADC). The disordered stretch occupies residues 139–168 (KPCGKVTKPKPQAESKKKKKEGKKQEKMLD). The tract at residues 147–168 (PKPQAESKKKKKEGKKQEKMLD) is chondroitin sulfate A binding.

The protein belongs to the pleiotrophin family. Interacts with ALK and NEK6. Interacts with PTPRZ1 (via chondroitin sulfate groups); promotes formation of homooligomers; oligomerization impairs tyrosine phosphatase activity. Forms a complex with PTPRZ1 and CTNNB1; this complex inactivates PTPRZ1 protein tyrosine phosphatase activity through PTN interaction and stimulates tyrosine phosphorylation of CTNNB1. Interacts with ITGB3 and ITGA5. Forms a complex with PTPRZ1 and integrin alpha-V/beta-3 (ITGAV:ITGB3) that stimulates endothelial cell migration through ITGB3 'Tyr-773' phosphorylation. Interacts with SDC3 (via heparan sulfate chains); this interaction mediates the neurite outgrowth-promoting signal from PTN to the cytoskeleton of growing neurites; this interaction mediates osteoblast recruitment. Interacts with GPC2 (via heparan sulfate); this interaction promotes neurite outgrowth through binding of PTN with chondroitin sulfate of proteoglycans, thereby releasing PTPRS of chondroitin sulfate proteoglycans (CSPGs) and leading to binding with heparan sulfate of GPC2. In terms of processing, phosphorylated by NEK6.

The protein resides in the secreted. Its function is as follows. Secreted growth factor that mediates its signal through cell-surface proteoglycan and non-proteoglycan receptors. Binds cell-surface proteoglycan receptor via their chondroitin sulfate (CS) groups. Thereby regulates many processes like cell proliferation, cell survival, cell growth, cell differentiation and cell migration in several tissues namely neuron and bone. Also plays a role in synaptic plasticity and learning-related behavior by inhibiting long-term synaptic potentiation. Binds PTPRZ1, leading to neutralization of the negative charges of the CS chains of PTPRZ1, inducing PTPRZ1 clustering, thereby causing the dimerization and inactivation of its phosphatase activity leading to increased tyrosine phosphorylation of each of the PTPRZ1 substrates like ALK, CTNNB1 or AFAP1L2 in order to activate the PI3K-AKT pathway. Through PTPRZ1 binding controls oligodendrocyte precursor cell differentiation by enhancing the phosphorylation of AFAP1L2 in order to activate the PI3K-AKT pathway. Forms a complex with PTPRZ1 and integrin alpha-V/beta-3 (ITGAV:ITGB3) that stimulates endothelial cell migration through SRC dephosphorylation and activation that consequently leads to ITGB3 'Tyr-773' phosphorylation. In adult hippocampus promotes dendritic arborization, spine development, and functional integration and connectivity of newborn granule neurons through ALK by activating AKT signaling pathway. Binds GPC2 and chondroitin sulfate proteoglycans (CSPGs) at the neuron surface, leading to abrogation of binding between PTPRS and CSPGs and neurite outgrowth promotion. Binds SDC3 and mediates bone formation by recruiting and attaching osteoblasts/osteoblast precursors to the sites for new bone deposition. Binds ALK and promotes cell survival and cell proliferation through MAPK pathway activation. Inhibits proliferation and enhances differentiation of neural stem cells by inhibiting FGF2-induced fibroblast growth factor receptor signaling pathway. Mediates regulatory mechanisms in normal hemostasis and in hematopoietic regeneration and in maintaining the balance of myeloid and lymphoid regeneration. In addition may play a role in the female reproductive system, auditory response and the progesterone-induced decidualization pathway. The polypeptide is Pleiotrophin (Sus scrofa (Pig)).